The sequence spans 231 residues: Orotidine 5'-phosphate decarboxylase (231 aa).

Substrate-binding positions include D11, K33, 60-69 (DLKFHDIPNT), T117, R178, Q187, G207, and R208. Residue K62 is the Proton donor of the active site.

The protein belongs to the OMP decarboxylase family. Type 1 subfamily. As to quaternary structure, homodimer.

The catalysed reaction is orotidine 5'-phosphate + H(+) = UMP + CO2. Its pathway is pyrimidine metabolism; UMP biosynthesis via de novo pathway; UMP from orotate: step 2/2. In terms of biological role, catalyzes the decarboxylation of orotidine 5'-monophosphate (OMP) to uridine 5'-monophosphate (UMP). The chain is Orotidine 5'-phosphate decarboxylase from Nitrosomonas europaea (strain ATCC 19718 / CIP 103999 / KCTC 2705 / NBRC 14298).